The sequence spans 304 residues: Phosphoribosylaminoimidazole-succinocarboxamide synthase (304 aa).

Belongs to the SAICAR synthetase family.

The enzyme catalyses 5-amino-1-(5-phospho-D-ribosyl)imidazole-4-carboxylate + L-aspartate + ATP = (2S)-2-[5-amino-1-(5-phospho-beta-D-ribosyl)imidazole-4-carboxamido]succinate + ADP + phosphate + 2 H(+). Its pathway is purine metabolism; IMP biosynthesis via de novo pathway; 5-amino-1-(5-phospho-D-ribosyl)imidazole-4-carboxamide from 5-amino-1-(5-phospho-D-ribosyl)imidazole-4-carboxylate: step 1/2. The sequence is that of Phosphoribosylaminoimidazole-succinocarboxamide synthase from Corynebacterium efficiens (strain DSM 44549 / YS-314 / AJ 12310 / JCM 11189 / NBRC 100395).